Here is a 230-residue protein sequence, read N- to C-terminus: NAD(P)H-hydrate epimerase (230 aa).

The YjeF N-terminal domain occupies 11–223 (YAAADIRAAE…DVGLDLSGAT (213 aa)). 59–63 (NNGGD) provides a ligand contact to (6S)-NADPHX. K(+) contacts are provided by asparagine 60 and aspartate 125. Residues 129–137 (GIGTTDSPA) and aspartate 165 each bind (6S)-NADPHX. Residue serine 168 participates in K(+) binding.

Belongs to the NnrE/AIBP family. K(+) is required as a cofactor.

The catalysed reaction is (6R)-NADHX = (6S)-NADHX. The enzyme catalyses (6R)-NADPHX = (6S)-NADPHX. Its function is as follows. Catalyzes the epimerization of the S- and R-forms of NAD(P)HX, a damaged form of NAD(P)H that is a result of enzymatic or heat-dependent hydration. This is a prerequisite for the S-specific NAD(P)H-hydrate dehydratase to allow the repair of both epimers of NAD(P)HX. The protein is NAD(P)H-hydrate epimerase of Clavibacter michiganensis subsp. michiganensis (strain NCPPB 382).